The sequence spans 241 residues: Sensory transduction protein LytT (241 aa).

Residues 3 to 117 (RVLIVDDEML…RIQQTLKKYK (115 aa)) form the Response regulatory domain. Asp-54 is subject to 4-aspartylphosphate. The 105-residue stretch at 137–241 (LALSVGESIV…AKELKKLLHI (105 aa)) folds into the HTH LytTR-type domain.

Post-translationally, phosphorylated by LytS.

The protein resides in the cytoplasm. Member of the two-component regulatory system LytS/LytT that probably regulates genes involved in cell wall metabolism. The polypeptide is Sensory transduction protein LytT (lytT) (Bacillus subtilis (strain 168)).